The following is a 49-amino-acid chain: uncharacterized protein (49 aa).

This is an uncharacterized protein from Enterobacteria phage T3 (Bacteriophage T3).